Reading from the N-terminus, the 391-residue chain is S-adenosylmethionine synthase (391 aa).

Histidine 14 serves as a coordination point for ATP. Residue aspartate 16 participates in Mg(2+) binding. K(+) is bound at residue glutamate 42. Residues glutamate 55 and glutamine 98 each contribute to the L-methionine site. The tract at residues 98-108 (QSVDIAMGVDE) is flexible loop. Residues 172–174 (DGK), 238–239 (RF), aspartate 247, 253–254 (RK), alanine 270, and lysine 274 contribute to the ATP site. Aspartate 247 is an L-methionine binding site. Residue lysine 278 participates in L-methionine binding.

It belongs to the AdoMet synthase family. As to quaternary structure, homotetramer; dimer of dimers. The cofactor is Mg(2+). K(+) serves as cofactor.

It is found in the cytoplasm. The catalysed reaction is L-methionine + ATP + H2O = S-adenosyl-L-methionine + phosphate + diphosphate. Its pathway is amino-acid biosynthesis; S-adenosyl-L-methionine biosynthesis; S-adenosyl-L-methionine from L-methionine: step 1/1. Its function is as follows. Catalyzes the formation of S-adenosylmethionine (AdoMet) from methionine and ATP. The overall synthetic reaction is composed of two sequential steps, AdoMet formation and the subsequent tripolyphosphate hydrolysis which occurs prior to release of AdoMet from the enzyme. The protein is S-adenosylmethionine synthase of Clostridium botulinum (strain Kyoto / Type A2).